Consider the following 316-residue polypeptide: N-acetyl-gamma-glutamyl-phosphate reductase (316 aa).

C136 is a catalytic residue.

This sequence belongs to the NAGSA dehydrogenase family. Type 1 subfamily.

It localises to the cytoplasm. It catalyses the reaction N-acetyl-L-glutamate 5-semialdehyde + phosphate + NADP(+) = N-acetyl-L-glutamyl 5-phosphate + NADPH + H(+). It functions in the pathway amino-acid biosynthesis; L-arginine biosynthesis; N(2)-acetyl-L-ornithine from L-glutamate: step 3/4. In terms of biological role, catalyzes the NADPH-dependent reduction of N-acetyl-5-glutamyl phosphate to yield N-acetyl-L-glutamate 5-semialdehyde. The sequence is that of N-acetyl-gamma-glutamyl-phosphate reductase from Xanthomonas campestris pv. campestris (strain 8004).